The sequence spans 461 residues: Argininosuccinate lyase (461 aa).

It belongs to the lyase 1 family. Argininosuccinate lyase subfamily.

The protein resides in the cytoplasm. It catalyses the reaction 2-(N(omega)-L-arginino)succinate = fumarate + L-arginine. Its pathway is amino-acid biosynthesis; L-arginine biosynthesis; L-arginine from L-ornithine and carbamoyl phosphate: step 3/3. The protein is Argininosuccinate lyase of Nitrosomonas eutropha (strain DSM 101675 / C91 / Nm57).